Here is a 485-residue protein sequence, read N- to C-terminus: Protein nucleotidyltransferase YdiU (485 aa).

Gly100, Gly102, Arg103, Lys123, Asp135, Gly136, Arg189, and Arg196 together coordinate ATP. The active-site Proton acceptor is the Asp265. Positions 266 and 275 each coordinate Mg(2+). Position 275 (Asp275) interacts with ATP.

Belongs to the SELO family. Requires Mg(2+) as cofactor. The cofactor is Mn(2+).

It catalyses the reaction L-seryl-[protein] + ATP = 3-O-(5'-adenylyl)-L-seryl-[protein] + diphosphate. The enzyme catalyses L-threonyl-[protein] + ATP = 3-O-(5'-adenylyl)-L-threonyl-[protein] + diphosphate. The catalysed reaction is L-tyrosyl-[protein] + ATP = O-(5'-adenylyl)-L-tyrosyl-[protein] + diphosphate. It carries out the reaction L-histidyl-[protein] + UTP = N(tele)-(5'-uridylyl)-L-histidyl-[protein] + diphosphate. It catalyses the reaction L-seryl-[protein] + UTP = O-(5'-uridylyl)-L-seryl-[protein] + diphosphate. The enzyme catalyses L-tyrosyl-[protein] + UTP = O-(5'-uridylyl)-L-tyrosyl-[protein] + diphosphate. In terms of biological role, nucleotidyltransferase involved in the post-translational modification of proteins. It can catalyze the addition of adenosine monophosphate (AMP) or uridine monophosphate (UMP) to a protein, resulting in modifications known as AMPylation and UMPylation. The protein is Protein nucleotidyltransferase YdiU of Trichormus variabilis (strain ATCC 29413 / PCC 7937) (Anabaena variabilis).